The following is a 42-amino-acid chain: Pelovaterin (42 aa).

Disulfide bonds link cysteine 8–cysteine 38, cysteine 16–cysteine 32, and cysteine 24–cysteine 39.

Its subcellular location is the secreted. The protein resides in the extracellular space. It is found in the extracellular matrix. Its function is as follows. Induces the nucleation and stabilization of vaterite, one of the crystalline polymorphs of calcium carbonate. Exhibits strong antimicrobial activity against Pseudomonas aeruginosa and Proteus vulgaris. The polypeptide is Pelovaterin (Pelodiscus sinensis (Chinese softshell turtle)).